We begin with the raw amino-acid sequence, 313 residues long: tRNA dimethylallyltransferase (313 aa).

Position 11-18 (11-18) interacts with ATP; that stretch reads GPTAGGKT. Substrate is bound at residue 13-18; the sequence is TAGGKT. 3 interaction with substrate tRNA regions span residues 36-39, 160-164, and 243-248; these read DSAL, QRIGR, and RCVGYR.

This sequence belongs to the IPP transferase family. Monomer. Mg(2+) serves as cofactor.

It catalyses the reaction adenosine(37) in tRNA + dimethylallyl diphosphate = N(6)-dimethylallyladenosine(37) in tRNA + diphosphate. Catalyzes the transfer of a dimethylallyl group onto the adenine at position 37 in tRNAs that read codons beginning with uridine, leading to the formation of N6-(dimethylallyl)adenosine (i(6)A). This Neisseria meningitidis serogroup B (strain ATCC BAA-335 / MC58) protein is tRNA dimethylallyltransferase.